The following is a 112-amino-acid chain: Nucleoid-associated protein FTM_1023 (112 aa).

It belongs to the YbaB/EbfC family. As to quaternary structure, homodimer.

Its subcellular location is the cytoplasm. It localises to the nucleoid. Binds to DNA and alters its conformation. May be involved in regulation of gene expression, nucleoid organization and DNA protection. The chain is Nucleoid-associated protein FTM_1023 from Francisella tularensis subsp. mediasiatica (strain FSC147).